Here is a 371-residue protein sequence, read N- to C-terminus: Cysteine endopeptidase Rep1 (371 aa).

The signal sequence occupies residues 1-28 (MGRVISSWRVLAVVAALMAMAAVELCAA). Residues 29-133 (IPFDERDLES…LPGFMYEGVR (105 aa)) constitute a propeptide, activation peptide. Disulfide bonds link Cys156–Cys198, Cys190–Cys231, and Cys290–Cys342. Cys159 is an active-site residue. Asn228 carries N-linked (GlcNAc...) asparagine glycosylation. Catalysis depends on residues His296 and Asn317.

It belongs to the peptidase C1 family. Expressed in germinating seeds.

It is found in the protein storage vacuole. Its function is as follows. Cysteine endopeptidase that digests in vitro both the acidic and basic subunits of glutelin, the major seed storage protein of rice. Acts as a negative regulator of cell death. The polypeptide is Cysteine endopeptidase Rep1 (Oryza sativa subsp. japonica (Rice)).